The sequence spans 127 residues: Classical arabinogalactan protein 10 (127 aa).

The first 21 residues, 1-21 (MASKSVVVLLFLALIASSAIA), serve as a signal peptide directing secretion. Q22 carries the pyrrolidone carboxylic acid modification. Residues 22 to 107 (QAPGPAPTRS…TGSTPVDNNN (86 aa)) form a disordered region. Residues P24, P26, P28, P32, and P36 each carry the 4-hydroxyproline modification. Residues P24, P26, P28, P32, and P36 are each glycosylated (O-linked (Ara...) hydroxyproline). 3 stretches are compositionally biased toward pro residues: residues 25–39 (GPAP…PAQP), 48–58 (SITPTPTPTPS), and 66–86 (VSPP…PPTS). The segment covering 98-107 (TGSTPVDNNN) has biased composition (polar residues). N107 carries GPI-anchor amidated asparagine lipidation. The propeptide at 108–127 (AATLAAGSLAGFVFVASLLL) is removed in mature form.

This sequence belongs to the classical AGP family. In terms of processing, O-glycosylated on hydroxyprolines; noncontiguous hydroxylproline residues are glycosylated with arabinogalactan. In terms of tissue distribution, predominantly expressed in flowers and at a lower level in roots and siliques.

It localises to the cell membrane. Its function is as follows. Proteoglycan that seems to be implicated in diverse developmental roles such as differentiation, cell-cell recognition, embryogenesis and programmed cell death. The protein is Classical arabinogalactan protein 10 (AGP10) of Arabidopsis thaliana (Mouse-ear cress).